Here is a 624-residue protein sequence, read N- to C-terminus: Chaperone protein HtpG (624 aa).

The interval 1–336 (MSMKGQETRG…SNDLPLNVSR (336 aa)) is a; substrate-binding. The b stretch occupies residues 337–552 (EILQDSRVTQ…ADEMSTQMAK (216 aa)). The c stretch occupies residues 553-624 (LFAAAGQQAP…IRRMNQLLTA (72 aa)).

It belongs to the heat shock protein 90 family. As to quaternary structure, homodimer.

It localises to the cytoplasm. Molecular chaperone. Has ATPase activity. This Yersinia enterocolitica serotype O:8 / biotype 1B (strain NCTC 13174 / 8081) protein is Chaperone protein HtpG.